We begin with the raw amino-acid sequence, 886 residues long: Alanine--tRNA ligase (886 aa).

Zn(2+) contacts are provided by histidine 564, histidine 568, cysteine 676, and histidine 680.

Belongs to the class-II aminoacyl-tRNA synthetase family. Requires Zn(2+) as cofactor.

Its subcellular location is the cytoplasm. It catalyses the reaction tRNA(Ala) + L-alanine + ATP = L-alanyl-tRNA(Ala) + AMP + diphosphate. Its function is as follows. Catalyzes the attachment of alanine to tRNA(Ala) in a two-step reaction: alanine is first activated by ATP to form Ala-AMP and then transferred to the acceptor end of tRNA(Ala). Also edits incorrectly charged Ser-tRNA(Ala) and Gly-tRNA(Ala) via its editing domain. The protein is Alanine--tRNA ligase of Bartonella bacilliformis (strain ATCC 35685 / KC583 / Herrer 020/F12,63).